The chain runs to 521 residues: Probable ATP-dependent RNA helicase Dbp45A (521 aa).

A Q motif motif is present at residues 7 to 35 (NPFQILGLRPWLVKQLTKLGLKGATPIQQ). The 172-residue stretch at 38 to 209 (IPAILAGQDC…IFPIASDCFE (172 aa)) folds into the Helicase ATP-binding domain. Residue 51–58 (AKTGSGKT) coordinates ATP. Residues 157–160 (DEAD) carry the DEAD box motif. One can recognise a Helicase C-terminal domain in the interval 237–386 (VLIEALRKYR…EHPIDQRMVE (150 aa)). Residues 448-521 (KRKLQHAEPA…GRADVKKDKA (74 aa)) are disordered. 2 stretches are compositionally biased toward basic and acidic residues: residues 460-482 (EEGK…FEKK) and 502-521 (LNKE…KDKA).

This sequence belongs to the DEAD box helicase family. DDX49/DBP8 subfamily.

It carries out the reaction ATP + H2O = ADP + phosphate + H(+). Functionally, probable ATP-binding RNA helicase. The protein is Probable ATP-dependent RNA helicase Dbp45A (Dbp45A) of Drosophila melanogaster (Fruit fly).